Consider the following 403-residue polypeptide: FAD-dependent monooxygenase tazP (403 aa).

FAD-binding residues include Gly-75, Arg-144, Asp-354, and Ala-367.

It belongs to the paxM FAD-dependent monooxygenase family. It depends on FAD as a cofactor.

The protein operates within secondary metabolite biosynthesis. Its function is as follows. FAD-dependent monooxygenase; part of the gene cluster that mediates the biosynthesis of azaterrilone A and other azaphilones, a class of fungal metabolites characterized by a highly oxygenated pyrano-quinone bicyclic core and exhibiting a broad range of bioactivities. The first step of the pathway begins with the non-reducing polyketide synthase tazA that assembles one acetyl-CoA starter unit, five malonyl-CoA units, and catalyzes a series of Claisen condensations, methylation, PT-mediated cyclization, and finally releases the first hexaketide precursor through the R-domain. The tazA product then undergoes reduction on its terminal ketone and the following pyran-ring formation by yet undetermined enzyme(s). Dehydration and enoyl reduction, possibly involving the trans-enoyl reductase tazE leads to the next intermediate. TazD is predicted as an acetyltransferase and might catalyze the acetylation steps leading to the synthesis of azaterrilone A. Azaterrilone A is not the final product of the taz pathway and both the highly reducing polyketide synthase tazB and the dual enzyme tazHJ catalyze late steps of the pathway, leading to the production of the 2 final stereoisomers that contain additional polyketide modification whose structures have still to be determined. The protein is FAD-dependent monooxygenase tazP of Aspergillus terreus (strain NIH 2624 / FGSC A1156).